The chain runs to 129 residues: Large ribosomal subunit protein bL17 (129 aa).

The protein belongs to the bacterial ribosomal protein bL17 family. Part of the 50S ribosomal subunit. Contacts protein L32.

This is Large ribosomal subunit protein bL17 from Serratia proteamaculans (strain 568).